Reading from the N-terminus, the 90-residue chain is Small ribosomal subunit protein bS16 (90 aa).

It belongs to the bacterial ribosomal protein bS16 family.

In Lactococcus lactis subsp. cremoris (strain MG1363), this protein is Small ribosomal subunit protein bS16.